Reading from the N-terminus, the 424-residue chain is S-adenosylmethionine synthase (424 aa).

An ATP-binding site is contributed by H16. Residue D18 coordinates Mg(2+). E44 provides a ligand contact to K(+). L-methionine is bound by residues E57 and Q100. The flexible loop stretch occupies residues 100–110; the sequence is QSPDIAQGVNT. Residues 175–177, 251–252, D260, 266–267, A283, and K287 contribute to the ATP site; these read DGK, KF, and RK. An L-methionine-binding site is contributed by D260. K291 serves as a coordination point for L-methionine.

This sequence belongs to the AdoMet synthase family. Homotetramer; dimer of dimers. Mg(2+) serves as cofactor. It depends on K(+) as a cofactor.

It localises to the cytoplasm. The enzyme catalyses L-methionine + ATP + H2O = S-adenosyl-L-methionine + phosphate + diphosphate. Its pathway is amino-acid biosynthesis; S-adenosyl-L-methionine biosynthesis; S-adenosyl-L-methionine from L-methionine: step 1/1. In terms of biological role, catalyzes the formation of S-adenosylmethionine (AdoMet) from methionine and ATP. The overall synthetic reaction is composed of two sequential steps, AdoMet formation and the subsequent tripolyphosphate hydrolysis which occurs prior to release of AdoMet from the enzyme. The sequence is that of S-adenosylmethionine synthase from Nostoc punctiforme (strain ATCC 29133 / PCC 73102).